The primary structure comprises 397 residues: Na(+)/H(+) antiporter NhaA (397 aa).

The next 12 membrane-spanning stretches (helical) occupy residues 14-34 (ASGI…NTPL), 36-56 (DLYF…FSIY), 59-79 (LLMW…GLEV), 95-115 (IFPA…FTLI), 125-145 (GWAI…GLLG), 154-174 (IFLL…IAIF), 177-197 (HELS…LIIM), 204-224 (AICA…KSGV), 254-274 (LLAP…NAGV), 292-312 (VALG…FLAV), 328-348 (IFAV…LAGL), and 365-385 (LGIL…LKLC).

It belongs to the NhaA Na(+)/H(+) (TC 2.A.33) antiporter family.

It localises to the cell inner membrane. It carries out the reaction Na(+)(in) + 2 H(+)(out) = Na(+)(out) + 2 H(+)(in). Its function is as follows. Na(+)/H(+) antiporter that extrudes sodium in exchange for external protons. In Glaesserella parasuis serovar 5 (strain SH0165) (Haemophilus parasuis), this protein is Na(+)/H(+) antiporter NhaA.